An 834-amino-acid polypeptide reads, in one-letter code: 1,4-alpha-glucan branching enzyme GlgB (834 aa).

Aspartate 511 (nucleophile) is an active-site residue. The Proton donor role is filled by glutamate 565.

It belongs to the glycosyl hydrolase 13 family. GlgB subfamily. Monomer.

It catalyses the reaction Transfers a segment of a (1-&gt;4)-alpha-D-glucan chain to a primary hydroxy group in a similar glucan chain.. It functions in the pathway glycan biosynthesis; glycogen biosynthesis. In terms of biological role, catalyzes the formation of the alpha-1,6-glucosidic linkages in glycogen by scission of a 1,4-alpha-linked oligosaccharide from growing alpha-1,4-glucan chains and the subsequent attachment of the oligosaccharide to the alpha-1,6 position. This Burkholderia thailandensis (strain ATCC 700388 / DSM 13276 / CCUG 48851 / CIP 106301 / E264) protein is 1,4-alpha-glucan branching enzyme GlgB (glgB).